Here is a 398-residue protein sequence, read N- to C-terminus: Bifunctional enzyme IspD/IspF (398 aa).

The tract at residues 1 to 234 is 2-C-methyl-D-erythritol 4-phosphate cytidylyltransferase; that stretch reads MANSRRTAAI…SRLAALLGDI (234 aa). Residues 235 to 398 are 2-C-methyl-D-erythritol 2,4-cyclodiphosphate synthase; the sequence is RTGTGYDVHA…LPWGPNGLSG (164 aa). A divalent metal cation contacts are provided by D241 and H243. 4-CDP-2-C-methyl-D-erythritol 2-phosphate-binding positions include 241–243 and 267–268; these read DVH and HS. H275 is an a divalent metal cation binding site. 4-CDP-2-C-methyl-D-erythritol 2-phosphate contacts are provided by residues 289 to 291, 365 to 368, F372, and R375; these read DIG and TTSE.

In the N-terminal section; belongs to the IspD/TarI cytidylyltransferase family. IspD subfamily. The protein in the C-terminal section; belongs to the IspF family. It depends on a divalent metal cation as a cofactor.

It catalyses the reaction 2-C-methyl-D-erythritol 4-phosphate + CTP + H(+) = 4-CDP-2-C-methyl-D-erythritol + diphosphate. The catalysed reaction is 4-CDP-2-C-methyl-D-erythritol 2-phosphate = 2-C-methyl-D-erythritol 2,4-cyclic diphosphate + CMP. It participates in isoprenoid biosynthesis; isopentenyl diphosphate biosynthesis via DXP pathway; isopentenyl diphosphate from 1-deoxy-D-xylulose 5-phosphate: step 2/6. The protein operates within isoprenoid biosynthesis; isopentenyl diphosphate biosynthesis via DXP pathway; isopentenyl diphosphate from 1-deoxy-D-xylulose 5-phosphate: step 4/6. Bifunctional enzyme that catalyzes the formation of 4-diphosphocytidyl-2-C-methyl-D-erythritol from CTP and 2-C-methyl-D-erythritol 4-phosphate (MEP) (IspD), and catalyzes the conversion of 4-diphosphocytidyl-2-C-methyl-D-erythritol 2-phosphate (CDP-ME2P) to 2-C-methyl-D-erythritol 2,4-cyclodiphosphate (ME-CPP) with a corresponding release of cytidine 5-monophosphate (CMP) (IspF). The chain is Bifunctional enzyme IspD/IspF from Rhodopseudomonas palustris (strain BisA53).